A 343-amino-acid chain; its full sequence is Flavone 3'-O-methyltransferase OMT1 (343 aa).

Residue asparagine 107 coordinates (E)-ferulate. S-adenosyl-L-homocysteine contacts are provided by glycine 184, aspartate 207, aspartate 227, methionine 228, methionine 240, and lysine 241. Catalysis depends on histidine 245, which acts as the Proton acceptor. Aspartate 246 provides a ligand contact to (E)-5-hydroxyferulate. Residues glutamate 273 and glutamate 305 contribute to the active site.

The protein belongs to the class I-like SAM-binding methyltransferase superfamily. Cation-independent O-methyltransferase family. COMT subfamily. Homodimer.

It catalyses the reaction (E)-5-hydroxyferulate + S-adenosyl-L-methionine = (E)-sinapate + S-adenosyl-L-homocysteine + H(+). It carries out the reaction luteolin + S-adenosyl-L-methionine = chrysoeriol + S-adenosyl-L-homocysteine + H(+). The catalysed reaction is quercetin + S-adenosyl-L-methionine = isorhamnetin + S-adenosyl-L-homocysteine + H(+). The enzyme catalyses (E)-caffeate + S-adenosyl-L-methionine = (E)-ferulate + S-adenosyl-L-homocysteine + H(+). It catalyses the reaction a 3'-hydroxyflavone + S-adenosyl-L-methionine = a 3'-methoxyflavone + S-adenosyl-L-homocysteine + H(+). Its pathway is flavonoid metabolism. In terms of biological role, catalyzes the 3'-O-methylation of the flavonoids luteolin and quercetin. Catalyzes the 3- of 5-O-methylation of the phenylpropanoids caffeate and 5-hydroxyferulate. Substrate preference is 5-hydroxyferulate &gt; luteolin &gt; quercetin &gt; caffeate. Apigenin, kempferol and 3,4-dimethylquercetin do not seem to be substrates for methylation. The protein is Flavone 3'-O-methyltransferase OMT1 of Chrysosplenium americanum (American golden saxifrage).